The sequence spans 341 residues: L-threonine 3-dehydrogenase (341 aa).

Cysteine 38 contributes to the Zn(2+) binding site. Residues threonine 40 and histidine 43 each act as charge relay system in the active site. Zn(2+) contacts are provided by histidine 63, glutamate 64, cysteine 93, cysteine 96, cysteine 99, and cysteine 107. NAD(+) is bound by residues isoleucine 175, aspartate 195, arginine 200, 262–264 (LGI), and 286–287 (IY).

This sequence belongs to the zinc-containing alcohol dehydrogenase family. As to quaternary structure, homotetramer. Zn(2+) is required as a cofactor.

Its subcellular location is the cytoplasm. It catalyses the reaction L-threonine + NAD(+) = (2S)-2-amino-3-oxobutanoate + NADH + H(+). The protein operates within amino-acid degradation; L-threonine degradation via oxydo-reductase pathway; glycine from L-threonine: step 1/2. Catalyzes the NAD(+)-dependent oxidation of L-threonine to 2-amino-3-ketobutyrate. In Shewanella frigidimarina (strain NCIMB 400), this protein is L-threonine 3-dehydrogenase.